Here is a 189-residue protein sequence, read N- to C-terminus: uncharacterized protein (189 aa).

The segment covering methionine 1 to valine 15 has biased composition (basic and acidic residues). The segment at methionine 1 to glutamine 77 is disordered. Acidic residues-rich tracts occupy residues glutamate 16–serine 29 and serine 46–aspartate 56. A compositionally biased stretch (polar residues) spans valine 65–glutamine 77.

This is an uncharacterized protein from Mus musculus (Mouse).